A 246-amino-acid polypeptide reads, in one-letter code: Bis(5'-nucleosyl)-tetraphosphatase PrpE [asymmetrical] (246 aa).

The protein belongs to the PrpE family. Ni(2+) serves as cofactor.

It catalyses the reaction P(1),P(4)-bis(5'-guanosyl) tetraphosphate + H2O = GMP + GTP + 2 H(+). In terms of biological role, asymmetrically hydrolyzes Ap4p to yield AMP and ATP. The protein is Bis(5'-nucleosyl)-tetraphosphatase PrpE [asymmetrical] of Bacillus thuringiensis subsp. konkukian (strain 97-27).